The following is a 172-amino-acid chain: Ribosome maturation factor RimP (172 aa).

This sequence belongs to the RimP family.

The protein resides in the cytoplasm. In terms of biological role, required for maturation of 30S ribosomal subunits. This chain is Ribosome maturation factor RimP, found in Nitratidesulfovibrio vulgaris (strain ATCC 29579 / DSM 644 / CCUG 34227 / NCIMB 8303 / VKM B-1760 / Hildenborough) (Desulfovibrio vulgaris).